Here is a 258-residue protein sequence, read N- to C-terminus: MTIIAAISCVFLFSILCETSALVLPNSTDLLLSNNNFTDIETALAAHLDSAKIPKARRKRYISQNDMIAILDYHNQVRGKVFPPASNMEYMVWDETLAKSAEAWAATCIWDHGPSYLLRFLGQNLSVRTGRYRSILQLVKPWYDEVKDYAFPYPQDCNPRCPMRCYGPMCTHYTQMVWATSNRIGCAIHTCQNMNVWGSVWRRAVYLVCNYAPKGNWIGEAPYKVGVPCSACPPSYGGSCTDNLCFPGVTSNYLYWFK.

A signal peptide spans 1–21; the sequence is MTIIAAISCVFLFSILCETSA. Residues 22 to 60 constitute a propeptide that is removed on maturation; it reads LVLPNSTDLLLSNNNFTDIETALAAHLDSAKIPKARRKR. Asn-26, Asn-36, and Asn-124 each carry an N-linked (GlcNAc...) asparagine glycan. Residues 71–211 enclose the SCP domain; it reads LDYHNQVRGK…RRAVYLVCNY (141 aa).

The protein belongs to the CRISP family.

The protein resides in the secreted. Serine protease inhibitor which displays weak inhibitory activity against trypsin. May play a role in facial patterning during embryonic development. This Gallus gallus (Chicken) protein is Peptidase inhibitor 15 (PI15).